A 65-amino-acid chain; its full sequence is Temporin-SN1 (65 aa).

The first 22 residues, 1–22 (MFTTKKSLLLLFFLGTINLSLC), serve as a signal peptide directing secretion. A propeptide spans 23–44 (QEERNAEEERRDGDDEGGVEVQ) (removed in mature form). K65 carries the lysine amide modification.

The protein belongs to the frog skin active peptide (FSAP) family. Temporin subfamily. Expressed by the skin glands.

The protein resides in the secreted. In terms of biological role, antimicrobial peptide. Active against a variety of Gram-positive bacterial strains. Not active against Gram-negative bacteria and against fungi. Shows hemolytic activity against human erythrocytes. The polypeptide is Temporin-SN1 (Sylvirana spinulosa (Fine-spined frog)).